The sequence spans 183 residues: Peptidyl-prolyl cis-trans isomerase 11 (183 aa).

Residues 20–182 (FLEVTAGGAP…LPIVVVQCGQ (163 aa)) enclose the PPIase cyclophilin-type domain.

The protein belongs to the cyclophilin-type PPIase family. PPIase H subfamily.

It catalyses the reaction [protein]-peptidylproline (omega=180) = [protein]-peptidylproline (omega=0). Its function is as follows. PPIases accelerate the folding of proteins. It catalyzes the cis-trans isomerization of proline imidic peptide bonds in oligopeptides. In Caenorhabditis elegans, this protein is Peptidyl-prolyl cis-trans isomerase 11 (cyn-11).